The primary structure comprises 204 residues: Inositol diphosphatase DSP2 (204 aa).

Residues 1–27 (MQLEISPRQRSQQQKEEEGEHQQRAGE) form a disordered region. The segment covering 13-27 (QQKEEEGEHQQRAGE) has biased composition (basic and acidic residues). A Tyrosine-protein phosphatase domain is found at 51 to 203 (NFAEVNDGIF…SSLMHLTASQ (153 aa)). The WPD loop important for active site topology stretch occupies residues 107 to 119 (FGIDGSKELLVNI). 3 residues coordinate 1D-myo-inositol hexakisphosphate: Asn-118, Ile-119, and Lys-123. Cys-143 (phosphocysteine intermediate) is an active-site residue.

Belongs to the protein-tyrosine phosphatase family. Atypical dual-specificity phosphatase Siw14-like subfamily. Expressed in roots and young panicles.

Its subcellular location is the cytoplasm. It localises to the nucleus. It catalyses the reaction 5-diphospho-1D-myo-inositol 1,2,3,4,6-pentakisphosphate + H2O = 1D-myo-inositol hexakisphosphate + phosphate + H(+). The enzyme catalyses 1,5-bis(diphospho)-1D-myo-inositol 2,3,4,6-tetrakisphosphate + H2O = 1-diphospho-1D-myo-inositol 2,3,4,5,6-pentakisphosphate + phosphate + 2 H(+). It carries out the reaction 3,5-bis(diphospho)-1D-myo-inositol 1,2,4,6-tetrakisphosphate + H2O = 3-diphospho-1D-myo-inositol 1,2,4,5,6-pentakisphosphate + phosphate + 2 H(+). The catalysed reaction is 6-diphospho-1D-myo-inositol pentakisphosphate + H2O = 1D-myo-inositol hexakisphosphate + phosphate + H(+). Its function is as follows. Cleaves the beta-phosphate at the 5-position of soluble inositol pyrophosphates. Has highest activity on 5-diphosphoinositol 1,2,3,4,6-pentakisphosphate (5-InsP(7)). Acts as a negative regulator of defense responses against the fungal pathogen Magnaporthe oryzae. The protein is Inositol diphosphatase DSP2 of Oryza sativa subsp. japonica (Rice).